We begin with the raw amino-acid sequence, 275 residues long: 2,3,4,5-tetrahydropyridine-2,6-dicarboxylate N-succinyltransferase (275 aa).

The substrate site is built by R106 and D143.

Belongs to the transferase hexapeptide repeat family. As to quaternary structure, homotrimer.

It is found in the cytoplasm. It catalyses the reaction (S)-2,3,4,5-tetrahydrodipicolinate + succinyl-CoA + H2O = (S)-2-succinylamino-6-oxoheptanedioate + CoA. Its pathway is amino-acid biosynthesis; L-lysine biosynthesis via DAP pathway; LL-2,6-diaminopimelate from (S)-tetrahydrodipicolinate (succinylase route): step 1/3. The chain is 2,3,4,5-tetrahydropyridine-2,6-dicarboxylate N-succinyltransferase from Paraburkholderia xenovorans (strain LB400).